The following is a 351-amino-acid chain: Probable minor fimbrial subunit LpfD (351 aa).

An N-terminal signal peptide occupies residues 1–22; the sequence is MKAAIALSLLGCVFGFSGKAFA.

It belongs to the fimbrial protein family.

The protein localises to the fimbrium. Functionally, part of the lpfABCC'DE fimbrial operon. LP fimbriae may participate in the interaction with eukaryotic cells by assisting in microcolony formation. This is Probable minor fimbrial subunit LpfD (lpfD) from Escherichia coli O157:H7.